A 211-amino-acid polypeptide reads, in one-letter code: MAEQHGAPEQAAAGKSHGGLGGSYKVTVYELENFQGKRCELSAECPNLTDSLLEKVGSIQVESGPWLAFERRAFRGEQFVLEKGDYPRWDAWSSSRRSDILLSLRPLHIDGPDHKLHLFENPAFSGRKMEIVDDDVPSLWAHGFQDRVASIRVINGTWVGYEFPGYRGRQYVFERGEFRHWNEWDANQPQLQSVRRIRDQKWHKRGCFLSS.

Met-1 is modified (N-acetylmethionine). Ala-2 carries the post-translational modification N-acetylalanine; in Beta-crystallin B3, N-terminally processed. The interval 2-23 (AEQHGAPEQAAAGKSHGGLGGS) is N-terminal arm. 2 Beta/gamma crystallin 'Greek key' domains span residues 24–63 (YKVT…QVES) and 64–108 (GPWL…RPLH). The interval 109–113 (IDGPD) is connecting peptide. Beta/gamma crystallin 'Greek key' domains follow at residues 114–155 (HKLH…RVIN) and 156–198 (GTWV…RRIR). The C-terminal arm stretch occupies residues 200 to 211 (QKWHKRGCFLSS).

The protein belongs to the beta/gamma-crystallin family. In terms of assembly, homo/heterodimer, or complexes of higher-order. The structure of beta-crystallin oligomers seems to be stabilized through interactions between the N-terminal arms.

Crystallins are the dominant structural components of the vertebrate eye lens. This is Beta-crystallin B3 (Crybb3) from Mus musculus (Mouse).